A 226-amino-acid polypeptide reads, in one-letter code: Imidazole glycerol phosphate synthase subunit HisH (226 aa).

Residues 6–214 enclose the Glutamine amidotransferase type-1 domain; that stretch reads NIALVDYGVG…VERAASRSAA (209 aa). Catalysis depends on Cys-84, which acts as the Nucleophile. Residues His-189 and Glu-191 contribute to the active site.

Heterodimer of HisH and HisF.

The protein localises to the cytoplasm. It carries out the reaction 5-[(5-phospho-1-deoxy-D-ribulos-1-ylimino)methylamino]-1-(5-phospho-beta-D-ribosyl)imidazole-4-carboxamide + L-glutamine = D-erythro-1-(imidazol-4-yl)glycerol 3-phosphate + 5-amino-1-(5-phospho-beta-D-ribosyl)imidazole-4-carboxamide + L-glutamate + H(+). The enzyme catalyses L-glutamine + H2O = L-glutamate + NH4(+). It participates in amino-acid biosynthesis; L-histidine biosynthesis; L-histidine from 5-phospho-alpha-D-ribose 1-diphosphate: step 5/9. IGPS catalyzes the conversion of PRFAR and glutamine to IGP, AICAR and glutamate. The HisH subunit catalyzes the hydrolysis of glutamine to glutamate and ammonia as part of the synthesis of IGP and AICAR. The resulting ammonia molecule is channeled to the active site of HisF. The chain is Imidazole glycerol phosphate synthase subunit HisH from Gloeobacter violaceus (strain ATCC 29082 / PCC 7421).